The following is a 251-amino-acid chain: tRNA pseudouridine synthase A (251 aa).

Catalysis depends on aspartate 53, which acts as the Nucleophile. Substrate is bound at residue tyrosine 110.

It belongs to the tRNA pseudouridine synthase TruA family. In terms of assembly, homodimer.

It carries out the reaction uridine(38/39/40) in tRNA = pseudouridine(38/39/40) in tRNA. In terms of biological role, formation of pseudouridine at positions 38, 39 and 40 in the anticodon stem and loop of transfer RNAs. The protein is tRNA pseudouridine synthase A of Mesoplasma florum (strain ATCC 33453 / NBRC 100688 / NCTC 11704 / L1) (Acholeplasma florum).